The primary structure comprises 509 residues: Proto-oncogene tyrosine-protein kinase LCK (509 aa).

Gly2 carries N-myristoyl glycine lipidation. The tract at residues 2 to 72 is interactions with CD4 and CD8; that stretch reads GCVCSSNPED…DNLVIALHSY (71 aa). Residues Cys3 and Cys5 are each lipidated (S-palmitoyl cysteine). The SH3 domain maps to 61–121; sequence LQDNLVIALH…PFNFVAKANS (61 aa). Residue Lys99 forms a Glycyl lysine isopeptide (Lys-Gly) (interchain with G-Cter in ubiquitin) linkage. The residue at position 102 (Ser102) is a Phosphoserine. An SH2 domain is found at 127–224; it reads WFFKNLSRKD…GLCTKLSRPC (98 aa). The segment at 154 to 242 is interaction with PTPRH; it reads RESESTAGSF…WWEDEWEVPR (89 aa). At Thr159 the chain carries Phosphothreonine. Ser162 bears the Phosphoserine mark. At Tyr192 the chain carries Phosphotyrosine. Residue Ser194 is modified to Phosphoserine. Residues 245–498 form the Protein kinase domain; the sequence is LKLVERLGAG…YLRSVLDDFF (254 aa). Residues 251–259 and Lys273 each bind ATP; that span reads LGAGQFGEV. Lys276 participates in a covalent cross-link: Glycyl lysine isopeptide (Lys-Gly) (interchain with G-Cter in ubiquitin). Catalysis depends on Asp364, which acts as the Proton acceptor. Tyr394 carries the post-translational modification Phosphotyrosine; by autocatalysis. Tyr505 bears the Phosphotyrosine mark.

This sequence belongs to the protein kinase superfamily. Tyr protein kinase family. SRC subfamily. Binds to the cytoplasmic domain of cell surface receptors, such as AXL, CD2, CD4, CD5, CD8, CD44, CD45 and CD122. Also binds to effector molecules, such as PI4K, VAV1, RASA1, FYB1 and to other protein kinases including CDK1, RAF1, ZAP70 and SYK. Binds to phosphatidylinositol 3'-kinase (PI3K) from T-lymphocytes through its SH3 domain and to the tyrosine phosphorylated form of KHDRBS1/p70 through its SH2 domain. Interacts with SQSTM1. Interacts with phosphorylated LIME1. Interacts with CBLB and PTPRH. Interacts with RUNX3. Forms a signaling complex with EPHA1, PTK2B and PI3-KINASE; upon activation by EFNA1 which may regulate T-lymphocytes migration. Associates with ZAP70 and RHOH; these interactions allow LCK-mediated RHOH and CD3 subunit phosphorylations in presence of a functional ZAP70. Interacts with CEACAM1 (via cytoplasmic domain); mediates CEACAM1 phosphorylation resulting in PTPN6 recruitment that dephosphorylates TCR stimulation-induced CD247 and ZAP70. Interacts with FYB2. Interacts with CD160. Interacts with CD48. Post-translationally, autophosphorylated on Tyr-394, increasing enzymatic activity, this site is dephosphorylated by PTN22. Phosphorylated on Tyr-505 by CSK, decreasing activity. Dephosphorylated by PTPRC/CD45. Dephosphorylation at Tyr-394 by PTPN2 negatively regulates T-cells differentiation. Dephosphorylation at Tyr-394 by DUSP22 negatively regulates T-cell receptor signaling. In terms of processing, myristoylation is required prior to palmitoylation. Palmitoylation regulates association with the plasma membrane and could be mediated by ZDHHC2. Post-translationally, 'Lys-63'-linked ubiquitinated at Lys-99 and Lys-276 by UBR2; this modification is required for autophosphorylation at Tyr-394.

The protein resides in the cell membrane. It is found in the cytoplasm. The protein localises to the cytosol. It carries out the reaction L-tyrosyl-[protein] + ATP = O-phospho-L-tyrosyl-[protein] + ADP + H(+). The relative activities of the inhibitory tyrosine-protein kinase CSK and the activating tyrosine-protein phosphatase PTPRC/CD45 determine the level of LCK activity. These interactions allow rapid and efficient activation of LCK in response to TCR stimulation. In terms of biological role, non-receptor tyrosine-protein kinase that plays an essential role in the selection and maturation of developing T-cells in the thymus and in the function of mature T-cells. Plays a key role in T-cell antigen receptor (TCR)-linked signal transduction pathways. Constitutively associated with the cytoplasmic portions of the CD4 and CD8 surface receptors. Association of the TCR with a peptide antigen-bound MHC complex facilitates the interaction of CD4 and CD8 with MHC class II and class I molecules, respectively, thereby recruiting the associated LCK protein to the vicinity of the TCR/CD3 complex. LCK then phosphorylates tyrosine residues within the immunoreceptor tyrosine-based activation motifs (ITAM) of the cytoplasmic tails of the TCR-gamma chains and CD3 subunits, initiating the TCR/CD3 signaling pathway. Once stimulated, the TCR recruits the tyrosine kinase ZAP70, that becomes phosphorylated and activated by LCK. Following this, a large number of signaling molecules are recruited, ultimately leading to lymphokine production. LCK also contributes to signaling by other receptor molecules. Associates directly with the cytoplasmic tail of CD2, which leads to hyperphosphorylation and activation of LCK. Also plays a role in the IL2 receptor-linked signaling pathway that controls the T-cell proliferative response. Binding of IL2 to its receptor results in increased activity of LCK. Is expressed at all stages of thymocyte development and is required for the regulation of maturation events that are governed by both pre-TCR and mature alpha beta TCR. Phosphorylates other substrates including RUNX3, PTK2B/PYK2, the microtubule-associated protein MAPT, RHOH or TYROBP. Interacts with UNC119; this interaction plays a crucial role in activation of LCK. This Rattus norvegicus (Rat) protein is Proto-oncogene tyrosine-protein kinase LCK (Lck).